The primary structure comprises 416 residues: Probable glucan 1,3-beta-glucosidase A (416 aa).

A signal peptide spans 1–22; sequence MFVESAKKALLALSLLAASAQA. N-linked (GlcNAc...) asparagine glycosylation occurs at N183. The Proton donor role is filled by E210. 2 disulfides stabilise this stretch: C290–C415 and C316–C342. Residue E308 is the Nucleophile of the active site.

Belongs to the glycosyl hydrolase 5 (cellulase A) family. In terms of assembly, monomer. Mn(2+) serves as cofactor.

The protein localises to the secreted. The enzyme catalyses Successive hydrolysis of beta-D-glucose units from the non-reducing ends of (1-&gt;3)-beta-D-glucans, releasing alpha-glucose.. Its function is as follows. Beta-glucanases participate in the metabolism of beta-glucan, the main structural component of the cell wall. It could also function biosynthetically as a transglycosylase. This Aspergillus niger (strain ATCC MYA-4892 / CBS 513.88 / FGSC A1513) protein is Probable glucan 1,3-beta-glucosidase A (exgA).